A 590-amino-acid polypeptide reads, in one-letter code: MSQGIITKVSGPLVVAEGLPEAKMFDVVKVGNQGLIGEIIEIRGERVSIQVYEETSGLGPGDPVVSTGEPLSVELGPGMLEGIFDGIQRPLDVIEKKVGSFITRGIDVPSLNREKKWKFTPKVKSGDKVSGGDIIGTVQETVIVEHRIMVPPAISGIVEDIREGEYTVTEPIARIKTDSGQIVEITMMQKWPVRKARPYKEKLPPEIPMPTGQRVIDTLFPVTKGGTACIPGPFGSGKTVVQHQLAKWADAEIVVYIGCGERGNEMTDVLLEFPELKDPKTEEPLMKRTVLIANTSNMPVAAREASIYTGITIAEYFRDMGYSVALMADSTSRWAEALREMSGRLEEMPGEEGYPAYLARRLAEFYERAGRVICLGSDNREGALTVVGAVSPPGGDLSEPVTQATLRVVKVFWALDSELAYARHFPAINWLTSYSLYSDVVEDYMNKNVSSDWGELRSEAMRLLQEEASLQEIVRLVGIDALSTRDRLVLEVARSIREDFLHQNAFHEVDTYSSMEKQYRMLKLIMIFYQEAQKALEKGVPFSEIEKHPVREKIARAKYVEESKLTVFDEIEKEIKKAMQGLIEGGAADA.

232–239 (GPFGSGKT) lines the ATP pocket.

The protein belongs to the ATPase alpha/beta chains family.

The enzyme catalyses ATP + H2O + 4 H(+)(in) = ADP + phosphate + 5 H(+)(out). Produces ATP from ADP in the presence of a proton gradient across the membrane. The V-type alpha chain is a catalytic subunit. This chain is V-type ATP synthase alpha chain, found in Thermoanaerobacter pseudethanolicus (strain ATCC 33223 / 39E) (Clostridium thermohydrosulfuricum).